A 725-amino-acid chain; its full sequence is Ribonucleoside-diphosphate reductase subunit alpha (725 aa).

Residues Thr-172, 188–189 (SC), Gly-217, 397–401 (NLCSE), and 599–603 (PTGSI) contribute to the substrate site. An intrachain disulfide couples Cys-189 to Cys-426. Asn-397 functions as the Proton acceptor in the catalytic mechanism. Catalysis depends on Cys-399, which acts as the Cysteine radical intermediate. Residue Glu-401 is the Proton acceptor of the active site.

It belongs to the ribonucleoside diphosphate reductase large chain family. In terms of assembly, tetramer of two alpha and two beta subunits. Co-immunoprecipitates with DarG in the presence and absence of darT.

It catalyses the reaction a 2'-deoxyribonucleoside 5'-diphosphate + [thioredoxin]-disulfide + H2O = a ribonucleoside 5'-diphosphate + [thioredoxin]-dithiol. Its activity is regulated as follows. Under complex allosteric control mediated by deoxynucleoside triphosphates and ATP binding. The type of nucleotide bound at the specificity site determines substrate preference. It seems probable that ATP makes the enzyme reduce CDP and UDP, dGTP favors ADP reduction and dTTP favors GDP reduction. CDP reduction is stimulated by dATP. Provides the precursors necessary for DNA synthesis. Catalyzes the biosynthesis of deoxyribonucleotides from the corresponding ribonucleotides. When coexpressed in E.coli with nrdF2 the 2 proteins complement a temperature-sensitive E.coli mutant, however coexpression with nrdF1 does not complement. This chain is Ribonucleoside-diphosphate reductase subunit alpha (nrdE), found in Mycobacterium tuberculosis (strain ATCC 25618 / H37Rv).